The following is a 320-amino-acid chain: Formimidoylglutamase (320 aa).

6 residues coordinate Mn(2+): H125, D153, H155, D157, D244, and D246.

This sequence belongs to the arginase family. It depends on Mn(2+) as a cofactor.

The catalysed reaction is N-formimidoyl-L-glutamate + H2O = formamide + L-glutamate. The protein operates within amino-acid degradation; L-histidine degradation into L-glutamate; L-glutamate from N-formimidoyl-L-glutamate (hydrolase route): step 1/1. In terms of biological role, catalyzes the conversion of N-formimidoyl-L-glutamate to L-glutamate and formamide. This Rhodococcus jostii (strain RHA1) protein is Formimidoylglutamase.